The primary structure comprises 582 residues: Putative BTB/POZ domain-containing protein At3g08660 (582 aa).

The disordered stretch occupies residues 1 to 21 (MGSDSTLSLPSSSPPCNNRSS). The BTB domain maps to 36-103 (GDIIVVVDGE…CYGINFDITA (68 aa)). Positions 196-466 (EMWTEELSAL…VRVLYTEQLR (271 aa)) constitute an NPH3 domain. Tyrosine 407 is subject to Phosphotyrosine. The disordered stretch occupies residues 558 to 582 (GGETRQKVNRKSRSVSERKSSRSGR). The segment covering 571-582 (SVSERKSSRSGR) has biased composition (basic and acidic residues).

Belongs to the NPH3 family.

Its pathway is protein modification; protein ubiquitination. Its function is as follows. May act as a substrate-specific adapter of an E3 ubiquitin-protein ligase complex (CUL3-RBX1-BTB) which mediates the ubiquitination and subsequent proteasomal degradation of target proteins. The protein is Putative BTB/POZ domain-containing protein At3g08660 of Arabidopsis thaliana (Mouse-ear cress).